Reading from the N-terminus, the 135-residue chain is Small ribosomal subunit protein eS6 (135 aa).

It belongs to the eukaryotic ribosomal protein eS6 family.

This Methanospirillum hungatei JF-1 (strain ATCC 27890 / DSM 864 / NBRC 100397 / JF-1) protein is Small ribosomal subunit protein eS6.